The primary structure comprises 201 residues: Probable quinol oxidase subunit 3 (201 aa).

Helical transmembrane passes span 20–40 (LGFWIFLTAEFSLFGTLFATL), 62–82 (LVLIMTFALLISSYTCGISIY), 91–111 (LMMFWMILTVLLGLVFVGFEI), 133–153 (FFILLGTHGAHVSLGIGWIIC), and 172–192 (FIVSLYWHFLDVVWIFIFTAV).

Belongs to the cytochrome c oxidase subunit 3 family.

The protein resides in the cell membrane. It carries out the reaction 2 a quinol + O2 = 2 a quinone + 2 H2O. Catalyzes quinol oxidation with the concomitant reduction of oxygen to water. The polypeptide is Probable quinol oxidase subunit 3 (qoxC) (Staphylococcus haemolyticus (strain JCSC1435)).